We begin with the raw amino-acid sequence, 87 residues long: U3-theraphotoxin-Hhn1i (87 aa).

Positions 1–24 are cleaved as a signal peptide; that stretch reads MVNMEASMFLTFAGLVLLFVVCYA. The propeptide occupies 25-52; it reads SESEEKEFPKEMLSSIFAVDNDFKQEER. Intrachain disulfides connect C54–C67, C61–C72, and C66–C79.

It belongs to the neurotoxin 10 (Hwtx-1) family. 51 (Hntx-8) subfamily. Hntx-8 sub-subfamily. Expressed by the venom gland.

Its subcellular location is the secreted. Ion channel inhibitor. The sequence is that of U3-theraphotoxin-Hhn1i from Cyriopagopus hainanus (Chinese bird spider).